Reading from the N-terminus, the 1184-residue chain is Nucleolar protein 6 (1184 aa).

The segment covering 1–10 (MGRIKEKESK) has biased composition (basic and acidic residues). 2 disordered regions span residues 1 to 42 (MGRI…NRVP) and 1133 to 1184 (REQR…NALC).

Belongs to the NRAP family. Part of the small subunit (SSU) processome, composed of more than 70 proteins and the RNA chaperone small nucleolar RNA (snoRNA) U3.

It is found in the nucleus. The protein resides in the nucleolus. It localises to the chromosome. Part of the small subunit (SSU) processome, first precursor of the small eukaryotic ribosomal subunit. During the assembly of the SSU processome in the nucleolus, many ribosome biogenesis factors, an RNA chaperone and ribosomal proteins associate with the nascent pre-rRNA and work in concert to generate RNA folding, modifications, rearrangements and cleavage as well as targeted degradation of pre-ribosomal RNA by the RNA exosome. The polypeptide is Nucleolar protein 6 (Drosophila virilis (Fruit fly)).